The chain runs to 310 residues: Acetaldehyde dehydrogenase 1 (310 aa).

12 to 15 (SGNI) lines the NAD(+) pocket. Catalysis depends on Cys-132, which acts as the Acyl-thioester intermediate. Residues 163-171 (SAGPGTRAN) and Asn-287 contribute to the NAD(+) site.

This sequence belongs to the acetaldehyde dehydrogenase family.

The enzyme catalyses acetaldehyde + NAD(+) + CoA = acetyl-CoA + NADH + H(+). In Pseudomonas putida (strain W619), this protein is Acetaldehyde dehydrogenase 1.